The primary structure comprises 446 residues: Cyclin-T1-1 (446 aa).

This sequence belongs to the cyclin family. Cyclin T subfamily.

The sequence is that of Cyclin-T1-1 (CYCT1-1) from Oryza sativa subsp. japonica (Rice).